Here is a 434-residue protein sequence, read N- to C-terminus: ATP-dependent RNA helicase uap56 (434 aa).

The segment at 1 to 43 (MASAQEDLIDYEEEEELVQDQPAQEITPAADTAENGEKSDKKG) is disordered. A compositionally biased stretch (acidic residues) spans 7–18 (DLIDYEEEEELV). Positions 51–79 (TGFRDFLLKPELLRAITDSGFEHPSEVQQ) match the Q motif motif. One can recognise a Helicase ATP-binding domain in the interval 82–257 (IPQSILGTDV…KKFMQNPLEI (176 aa)). Residue 95-102 (AKSGMGKT) participates in ATP binding. The DECD box signature appears at 204–207 (DECD). The region spanning 269-430 (GLQQHYVKLE…ELPDEIDVGS (162 aa)) is the Helicase C-terminal domain.

The protein belongs to the DEAD box helicase family. DECD subfamily. As to quaternary structure, interacts with mlo3 and rae1.

The protein resides in the nucleus. The catalysed reaction is ATP + H2O = ADP + phosphate + H(+). ATP-binding RNA helicase involved in transcription elongation and required for the export of mRNA out of the nucleus. SUB2 also plays a role in pre-mRNA splicing and spliceosome assembly. May be involved in rDNA and telomeric silencing, and maintenance of genome integrity. Links the mRNA adapter mlo3 to rae1 for targeting mRNA-protein complex to the proteins of the nucleoporin complex (NPC). The chain is ATP-dependent RNA helicase uap56 (uap56) from Schizosaccharomyces pombe (strain 972 / ATCC 24843) (Fission yeast).